A 141-amino-acid chain; its full sequence is Zinc finger HIT domain-containing protein 3 (141 aa).

The HIT-type; degenerate zinc finger occupies 1 to 28 (LEKPKYRCPACRVPYCSVACFRKHKEQC). 4 residues coordinate Zn(2+): cysteine 8, cysteine 11, histidine 24, and cysteine 28. Serine 66 is modified (phosphoserine).

As to quaternary structure, thyroid receptor interacting proteins (TRIPs) specifically interact with the ligand binding domain of the thyroid receptor (TR). Requires the presence of thyroid hormone for its interaction. Interacts with NUFIP1. Interacts (via HIT-type zinc finger) with the RUVBL1/RUVBL2 complex in the presence of ADP.

The protein localises to the cytoplasm. It is found in the nucleus. The chain is Zinc finger HIT domain-containing protein 3 (ZNHIT3) from Pan troglodytes (Chimpanzee).